Consider the following 252-residue polypeptide: 5-oxoprolinase subunit A (252 aa).

This sequence belongs to the LamB/PxpA family. Forms a complex composed of PxpA, PxpB and PxpC.

It catalyses the reaction 5-oxo-L-proline + ATP + 2 H2O = L-glutamate + ADP + phosphate + H(+). In terms of biological role, catalyzes the cleavage of 5-oxoproline to form L-glutamate coupled to the hydrolysis of ATP to ADP and inorganic phosphate. This Mycobacterium leprae (strain Br4923) protein is 5-oxoprolinase subunit A.